A 773-amino-acid chain; its full sequence is Polyribonucleotide nucleotidyltransferase (773 aa).

2 residues coordinate Mg(2+): D532 and D538. The 60-residue stretch at 598–657 folds into the KH domain; it reads PRVITIKVPVDKIGEVIGPKGKVINAITEETGAQISIEDDGTVFVGATDGLSAQAAINKI. Positions 669-738 constitute an S1 motif domain; that stretch reads GERFLGTVVK…KRGKISLVLV (70 aa). The tract at residues 749–773 is disordered; the sequence is APADAGAAQEFGSGTAPADAATASS.

Belongs to the polyribonucleotide nucleotidyltransferase family. The cofactor is Mg(2+).

The protein localises to the cytoplasm. The catalysed reaction is RNA(n+1) + phosphate = RNA(n) + a ribonucleoside 5'-diphosphate. Involved in mRNA degradation. Catalyzes the phosphorolysis of single-stranded polyribonucleotides processively in the 3'- to 5'-direction. The protein is Polyribonucleotide nucleotidyltransferase of Mycobacterium leprae (strain Br4923).